Here is a 139-residue protein sequence, read N- to C-terminus: CLAVATA3/ESR (CLE)-related protein 1 (139 aa).

The signal sequence occupies residues 1–22 (MPNIFKILLIVLLAVVSFRLSA). The tract at residues 23 to 90 (STGDKKTAND…VPSHLTNRSM (68 aa)) is required for secretion from the host cytoplasm to the host apoplasm. Residues asparagine 37 and asparagine 87 are each glycosylated (N-linked (GlcNAc...) asparagine). A disordered region spans residues 66-139 (AIGRSNAQGG…SPSGPDPHHH (74 aa)). The stretch at 100–125 (EKGAATRVEKMRAQLRELAEKMTDKD) forms a coiled coil. Basic and acidic residues predominate over residues 106–128 (RVEKMRAQLRELAEKMTDKDPKR). The short motif at 128-139 (RLSPSGPDPHHH) is the CLE element.

The protein belongs to the CLV3/ESR signal peptide family. Highly expressed exclusively within the dorsal esophageal gland cell during syncytium formation in host plants (at protein level).

The protein resides in the secreted. The protein localises to the host cytoplasm. Its subcellular location is the host extracellular space. It localises to the extracellular space. It is found in the apoplast. Mimics host plant CLE extracellular signal peptides that regulate cell fate. May play a role in the differentiation or division of feeding cells (syncytia) induced in plant roots during infection. This is CLAVATA3/ESR (CLE)-related protein 1 (CLE1) from Heterodera glycines (Soybean cyst nematode worm).